A 385-amino-acid polypeptide reads, in one-letter code: Glucose-fructose oxidoreductase domain-containing protein 2 (385 aa).

Positions 1–25 (MKLLPGVGVFGTGSSARVLVPLLRA) are cleaved as a signal peptide.

It belongs to the Gfo/Idh/MocA family.

It is found in the secreted. It localises to the extracellular space. The protein resides in the extracellular matrix. In terms of biological role, promotes matrix assembly. The polypeptide is Glucose-fructose oxidoreductase domain-containing protein 2 (Gfod2) (Mus musculus (Mouse)).